The primary structure comprises 72 residues: Delta-actitoxin-Avd2b 1 (72 aa).

The N-terminal stretch at methionine 1 to alanine 21 is a signal peptide. The propeptide occupies asparagine 22 to glycine 42. Disulfide bonds link cysteine 47-cysteine 62, cysteine 48-cysteine 56, and cysteine 50-cysteine 67.

It belongs to the sea anemone short toxin (type III) family.

The protein localises to the secreted. The protein resides in the nematocyst. Functionally, voltage-gated sodium channel (Nav) inhibitor. 1 uM completely inhibits insect voltage-gated sodium channel inactivation (DmNav1 from D.melanogaster). This is Delta-actitoxin-Avd2b 1 from Anemonia viridis (Snakelocks anemone).